The sequence spans 243 residues: 2-C-methyl-D-erythritol 4-phosphate cytidylyltransferase (243 aa).

The protein belongs to the IspD/TarI cytidylyltransferase family. IspD subfamily.

It carries out the reaction 2-C-methyl-D-erythritol 4-phosphate + CTP + H(+) = 4-CDP-2-C-methyl-D-erythritol + diphosphate. Its pathway is isoprenoid biosynthesis; isopentenyl diphosphate biosynthesis via DXP pathway; isopentenyl diphosphate from 1-deoxy-D-xylulose 5-phosphate: step 2/6. Its function is as follows. Catalyzes the formation of 4-diphosphocytidyl-2-C-methyl-D-erythritol from CTP and 2-C-methyl-D-erythritol 4-phosphate (MEP). The protein is 2-C-methyl-D-erythritol 4-phosphate cytidylyltransferase of Aeromonas hydrophila subsp. hydrophila (strain ATCC 7966 / DSM 30187 / BCRC 13018 / CCUG 14551 / JCM 1027 / KCTC 2358 / NCIMB 9240 / NCTC 8049).